The sequence spans 394 residues: 1-deoxy-D-xylulose 5-phosphate reductoisomerase (394 aa).

NADPH is bound by residues T14, G15, S16, I17, G40, and N128. K129 lines the 1-deoxy-D-xylulose 5-phosphate pocket. E130 is a binding site for NADPH. D154 is a Mn(2+) binding site. 1-deoxy-D-xylulose 5-phosphate is bound by residues S155, E156, S180, and H203. E156 serves as a coordination point for Mn(2+). G209 is a binding site for NADPH. 1-deoxy-D-xylulose 5-phosphate is bound by residues S216, N221, K222, and E225. E225 contacts Mn(2+).

It belongs to the DXR family. The cofactor is Mg(2+). Mn(2+) serves as cofactor.

The enzyme catalyses 2-C-methyl-D-erythritol 4-phosphate + NADP(+) = 1-deoxy-D-xylulose 5-phosphate + NADPH + H(+). Its pathway is isoprenoid biosynthesis; isopentenyl diphosphate biosynthesis via DXP pathway; isopentenyl diphosphate from 1-deoxy-D-xylulose 5-phosphate: step 1/6. In terms of biological role, catalyzes the NADPH-dependent rearrangement and reduction of 1-deoxy-D-xylulose-5-phosphate (DXP) to 2-C-methyl-D-erythritol 4-phosphate (MEP). The chain is 1-deoxy-D-xylulose 5-phosphate reductoisomerase from Xylella fastidiosa (strain M12).